Consider the following 543-residue polypeptide: Chaperonin GroEL 1 (543 aa).

Residues threonine 29–proline 32, aspartate 86–threonine 90, glycine 413, asparagine 479–alanine 481, and aspartate 495 contribute to the ATP site.

This sequence belongs to the chaperonin (HSP60) family. Forms a cylinder of 14 subunits composed of two heptameric rings stacked back-to-back. Interacts with the co-chaperonin GroES.

It localises to the cytoplasm. It catalyses the reaction ATP + H2O + a folded polypeptide = ADP + phosphate + an unfolded polypeptide.. Together with its co-chaperonin GroES, plays an essential role in assisting protein folding. The GroEL-GroES system forms a nano-cage that allows encapsulation of the non-native substrate proteins and provides a physical environment optimized to promote and accelerate protein folding. This Prochlorococcus marinus (strain NATL2A) protein is Chaperonin GroEL 1.